The primary structure comprises 190 residues: NADH dehydrogenase [ubiquinone] iron-sulfur protein 3 (190 aa).

It belongs to the complex I 30 kDa subunit family. As to quaternary structure, complex I is composed of about 45 different subunits. This is a component of the iron-sulfur (IP) fragment of the enzyme.

The protein localises to the mitochondrion inner membrane. The enzyme catalyses a ubiquinone + NADH + 5 H(+)(in) = a ubiquinol + NAD(+) + 4 H(+)(out). Functionally, core subunit of the mitochondrial membrane respiratory chain NADH dehydrogenase (Complex I) that is believed to belong to the minimal assembly required for catalysis. Complex I functions in the transfer of electrons from NADH to the respiratory chain. The immediate electron acceptor for the enzyme is believed to be ubiquinone. The polypeptide is NADH dehydrogenase [ubiquinone] iron-sulfur protein 3 (NAD9) (Solanum tuberosum (Potato)).